The following is a 421-amino-acid chain: POU domain, class 4, transcription factor 1 (421 aa).

The short motif at 57–66 (RAEALAAVDI) is the POU-IV box element. Disordered stretches follow at residues 94–117 (STVP…GDLL) and 133–200 (GAGA…GLGH). Residues 99 to 108 (AHHHHHHHHH) show a composition bias toward basic residues. Residues 133–186 (GAGAAGGGGGAHDGPGGGGGPGGGGGPGGGGPGGGGGGGGPGGGGGGPGGGLLG) are compositionally biased toward gly residues. Residues 262 to 339 (DSDTDPRELE…ILQAWLEEAE (78 aa)) form the POU-specific domain. Positions 357-416 (KKRKRTSIAAPEKRSLEAYFAVQPRPSSEKIAAIAEKLDLKKNVVRVWFCNQRQKQKRMK) form a DNA-binding region, homeobox.

This sequence belongs to the POU transcription factor family. Class-4 subfamily. As to quaternary structure, interacts (via N-terminus) with RIT2; the interaction controls POU4F1 transactivation activity on some neuronal target genes. Isoform 1 interacts with POU4F2 isoform 2; this interaction inhibits both POU4F1 DNA-binding and transcriptional activities. Isoform 1 interacts (C-terminus) with ESR1 (via DNA-binding domain); this interaction decreases the estrogen receptor ESR1 transcriptional activity in a DNA- and ligand 17-beta-estradiol-independent manner. Expressed in mature osteoclasts (at protein level). Brain, peripheral sensory nervous system and retina. In the adult nervous system, predominates in the medial habenula, superficial gray of the superior colliculus, red nucleus, mesencephalic nucleus of the trigeminal ganglion, nucleus ambiguus, inferior olivary nucleus, and peripheral sensory ganglia.

It localises to the nucleus. Its subcellular location is the cytoplasm. Multifunctional transcription factor with different regions mediating its different effects. Acts by binding (via its C-terminal domain) to sequences related to the consensus octamer motif 5'-ATGCAAAT-3' in the regulatory regions of its target genes. Regulates the expression of specific genes involved in differentiation and survival within a subset of neuronal lineages. It has been shown that activation of some of these genes requires its N-terminal domain, maybe through a neuronal-specific cofactor. Activates BCL2 expression and protects neuronal cells from apoptosis (via the N-terminal domain). Induces neuronal process outgrowth and the coordinate expression of genes encoding synaptic proteins. Exerts its major developmental effects in somatosensory neurons and in brainstem nuclei involved in motor control. Stimulates the binding affinity of the nuclear estrogene receptor ESR1 to DNA estrogen response element (ERE), and hence modulates ESR1-induced transcriptional activity. May positively regulate POU4F2 and POU4F3. Regulates dorsal root ganglion sensory neuron specification and axonal projection into the spinal cord. Plays a role in TNFSF11-mediated terminal osteoclast differentiation. Negatively regulates its own expression interacting directly with a highly conserved autoregulatory domain surrounding the transcription initiation site. In terms of biological role, able to act as transcription factor, cannot regulate the expression of the same subset of genes than isoform 1. Does not have antiapoptotic effect on neuronal cells. The polypeptide is POU domain, class 4, transcription factor 1 (Pou4f1) (Mus musculus (Mouse)).